The sequence spans 189 residues: Thymidine kinase (189 aa).

ATP contacts are provided by residues Gly-9–Thr-16 and Asp-85–Gln-88. Glu-86 serves as the catalytic Proton acceptor. Zn(2+) is bound by residues Cys-143, Cys-146, Cys-180, and His-183.

The protein belongs to the thymidine kinase family. As to quaternary structure, homotetramer.

It is found in the cytoplasm. It catalyses the reaction thymidine + ATP = dTMP + ADP + H(+). This Streptococcus pyogenes serotype M6 (strain ATCC BAA-946 / MGAS10394) protein is Thymidine kinase.